We begin with the raw amino-acid sequence, 497 residues long: Putative aldehyde dehydrogenase AldA (497 aa).

213 to 219 (GKGSESG) provides a ligand contact to NAD(+). Residues Glu257 and Cys291 contribute to the active site.

The protein belongs to the aldehyde dehydrogenase family.

The enzyme catalyses an aldehyde + NAD(+) + H2O = a carboxylate + NADH + 2 H(+). In Staphylococcus epidermidis (strain ATCC 35984 / DSM 28319 / BCRC 17069 / CCUG 31568 / BM 3577 / RP62A), this protein is Putative aldehyde dehydrogenase AldA (aldA).